The chain runs to 333 residues: Cytochrome c oxidase assembly protein COX18, mitochondrial (333 aa).

A helical transmembrane segment spans residues phenylalanine 168–leucine 188. Residues arginine 189 to serine 223 lie on the Mitochondrial matrix side of the membrane. Residues threonine 224 to leucine 244 form a helical membrane-spanning segment. Residues glutamine 245–alanine 262 are Mitochondrial intermembrane-facing. A helical transmembrane segment spans residues methionine 263–leucine 283. The Mitochondrial matrix portion of the chain corresponds to cysteine 284–lysine 333.

Belongs to the OXA1/ALB3/YidC family. In terms of assembly, found in a complex with TMEM177, COA6, MT-CO2/COX2, COX20, SCO1 and SCO2. Interacts transiently with MT-CO2/COX2 during its maturation. Interacts with COX20 in a MT-CO2/COX2-dependent manner.

Its subcellular location is the mitochondrion inner membrane. Functionally, mitochondrial membrane insertase required for the translocation of the C-terminus of cytochrome c oxidase subunit II (MT-CO2/COX2) across the mitochondrial inner membrane. Plays a role in MT-CO2/COX2 maturation following the COX20-mediated stabilization of newly synthesized MT-CO2/COX2 protein and before the action of the metallochaperones SCO1/2. Essential for the assembly and stability of the mitochondrial respiratory chain complex IV (also known as cytochrome c oxidase). The protein is Cytochrome c oxidase assembly protein COX18, mitochondrial (COX18) of Homo sapiens (Human).